Reading from the N-terminus, the 230-residue chain is Cytochrome c oxidase subunit 2 (230 aa).

The Mitochondrial intermembrane segment spans residues 1-14; sequence MAHPTQLGFQDAAS. The helical transmembrane segment at 15 to 45 threads the bilayer; the sequence is PVMEELLHFHDHALMIVFLISTLVLYIIIAM. Over 46–59 the chain is Mitochondrial matrix; the sequence is VSTKLTNKYILDSQ. Residues 60–87 form a helical membrane-spanning segment; it reads EIEIVWTILPAVILVLIALPSLRILYLM. Over 88–230 the chain is Mitochondrial intermembrane; the sequence is DEINDPHLTI…NWSSLMLEDA (143 aa). The Cu cation site is built by H161, C196, E198, C200, H204, and M207. Residue E198 participates in Mg(2+) binding.

This sequence belongs to the cytochrome c oxidase subunit 2 family. In terms of assembly, component of the cytochrome c oxidase (complex IV, CIV), a multisubunit enzyme composed of 14 subunits. The complex is composed of a catalytic core of 3 subunits MT-CO1, MT-CO2 and MT-CO3, encoded in the mitochondrial DNA, and 11 supernumerary subunits COX4I, COX5A, COX5B, COX6A, COX6B, COX6C, COX7A, COX7B, COX7C, COX8 and NDUFA4, which are encoded in the nuclear genome. The complex exists as a monomer or a dimer and forms supercomplexes (SCs) in the inner mitochondrial membrane with NADH-ubiquinone oxidoreductase (complex I, CI) and ubiquinol-cytochrome c oxidoreductase (cytochrome b-c1 complex, complex III, CIII), resulting in different assemblies (supercomplex SCI(1)III(2)IV(1) and megacomplex MCI(2)III(2)IV(2)). Found in a complex with TMEM177, COA6, COX18, COX20, SCO1 and SCO2. Interacts with TMEM177 in a COX20-dependent manner. Interacts with COX20. Interacts with COX16. Cu cation serves as cofactor.

It is found in the mitochondrion inner membrane. The enzyme catalyses 4 Fe(II)-[cytochrome c] + O2 + 8 H(+)(in) = 4 Fe(III)-[cytochrome c] + 2 H2O + 4 H(+)(out). Component of the cytochrome c oxidase, the last enzyme in the mitochondrial electron transport chain which drives oxidative phosphorylation. The respiratory chain contains 3 multisubunit complexes succinate dehydrogenase (complex II, CII), ubiquinol-cytochrome c oxidoreductase (cytochrome b-c1 complex, complex III, CIII) and cytochrome c oxidase (complex IV, CIV), that cooperate to transfer electrons derived from NADH and succinate to molecular oxygen, creating an electrochemical gradient over the inner membrane that drives transmembrane transport and the ATP synthase. Cytochrome c oxidase is the component of the respiratory chain that catalyzes the reduction of oxygen to water. Electrons originating from reduced cytochrome c in the intermembrane space (IMS) are transferred via the dinuclear copper A center (CU(A)) of subunit 2 and heme A of subunit 1 to the active site in subunit 1, a binuclear center (BNC) formed by heme A3 and copper B (CU(B)). The BNC reduces molecular oxygen to 2 water molecules using 4 electrons from cytochrome c in the IMS and 4 protons from the mitochondrial matrix. The sequence is that of Cytochrome c oxidase subunit 2 (mt-co2) from Carassius auratus (Goldfish).